Consider the following 295-residue polypeptide: Pyridoxal 5'-phosphate synthase subunit PdxS (295 aa).

D25 contributes to the D-ribose 5-phosphate binding site. The Schiff-base intermediate with D-ribose 5-phosphate role is filled by K82. G154 provides a ligand contact to D-ribose 5-phosphate. R166 contacts D-glyceraldehyde 3-phosphate. D-ribose 5-phosphate-binding positions include G215 and 236-237; that span reads GS.

It belongs to the PdxS/SNZ family. As to quaternary structure, in the presence of PdxT, forms a dodecamer of heterodimers.

The catalysed reaction is aldehydo-D-ribose 5-phosphate + D-glyceraldehyde 3-phosphate + L-glutamine = pyridoxal 5'-phosphate + L-glutamate + phosphate + 3 H2O + H(+). It functions in the pathway cofactor biosynthesis; pyridoxal 5'-phosphate biosynthesis. Functionally, catalyzes the formation of pyridoxal 5'-phosphate from ribose 5-phosphate (RBP), glyceraldehyde 3-phosphate (G3P) and ammonia. The ammonia is provided by the PdxT subunit. Can also use ribulose 5-phosphate and dihydroxyacetone phosphate as substrates, resulting from enzyme-catalyzed isomerization of RBP and G3P, respectively. The chain is Pyridoxal 5'-phosphate synthase subunit PdxS from Staphylococcus saprophyticus subsp. saprophyticus (strain ATCC 15305 / DSM 20229 / NCIMB 8711 / NCTC 7292 / S-41).